We begin with the raw amino-acid sequence, 82 residues long: Small ribosomal subunit protein bS16 (82 aa).

It belongs to the bacterial ribosomal protein bS16 family.

The sequence is that of Small ribosomal subunit protein bS16 from Bdellovibrio bacteriovorus (strain ATCC 15356 / DSM 50701 / NCIMB 9529 / HD100).